We begin with the raw amino-acid sequence, 494 residues long: Subtilisin-like serine protease Pen ch 18.0101 (494 aa).

Residues 1–16 (MKGFLSLTLLPLLVAA) form the signal peptide. Residues 17–136 (SPVAVNSIHN…IEKDSEVRTM (120 aa)) constitute a propeptide, removed in mature form. In terms of domain architecture, Inhibitor I9 spans 43–136 (SYIVVFKKHV…IEKDSEVRTM (94 aa)). The 303-residue stretch at 146–448 (PWGLARISHR…GGSANYTKIL (303 aa)) folds into the Peptidase S8 domain. IgE-binding regions lie at residues 180–198 (VIDT…RANW) and 209–231 (EDGN…GVAK). Catalysis depends on charge relay system residues D182 and H214. 2 N-linked (GlcNAc...) asparagine glycosylation sites follow: N244 and N280. Catalysis depends on S376, which acts as the Charge relay system. N443 carries an N-linked (GlcNAc...) asparagine glycan. Residues 454 to 494 (KAHNAETTVEDRIGIIIDSAEKAFHKELGAIYSEIKDAVSV) constitute a propeptide, removed in mature form.

This sequence belongs to the peptidase S8 family.

Serine protease. The polypeptide is Subtilisin-like serine protease Pen ch 18.0101 (Penicillium rubens).